Here is a 358-residue protein sequence, read N- to C-terminus: Heme A synthase (358 aa).

8 consecutive transmembrane segments (helical) span residues 25–45 (LVRY…MVGG), 111–131 (LLAR…WLTG), 141–161 (MLGL…MVAS), 176–196 (IHLT…RGLV), 210–230 (FAGW…LVAG), 269–289 (VQFV…LHAV), 304–324 (TIVL…TLLM), and 326–346 (APLH…AFAV). His273 is a binding site for heme. Residue His334 coordinates heme.

It belongs to the COX15/CtaA family. Type 2 subfamily. In terms of assembly, interacts with CtaB. The cofactor is heme b.

The protein resides in the cell membrane. It catalyses the reaction Fe(II)-heme o + 2 A + H2O = Fe(II)-heme a + 2 AH2. Its pathway is porphyrin-containing compound metabolism; heme A biosynthesis; heme A from heme O: step 1/1. Catalyzes the conversion of heme O to heme A by two successive hydroxylations of the methyl group at C8. The first hydroxylation forms heme I, the second hydroxylation results in an unstable dihydroxymethyl group, which spontaneously dehydrates, resulting in the formyl group of heme A. In Brucella suis (strain ATCC 23445 / NCTC 10510), this protein is Heme A synthase.